We begin with the raw amino-acid sequence, 529 residues long: Bifunctional purine biosynthesis protein PurH (529 aa).

Residues 1–148 (MQQRRPVRRA…KNHKDVAIVV (148 aa)) enclose the MGS-like domain. At Lys287 the chain carries N6-acetyllysine.

Belongs to the PurH family.

It carries out the reaction (6R)-10-formyltetrahydrofolate + 5-amino-1-(5-phospho-beta-D-ribosyl)imidazole-4-carboxamide = 5-formamido-1-(5-phospho-D-ribosyl)imidazole-4-carboxamide + (6S)-5,6,7,8-tetrahydrofolate. The enzyme catalyses IMP + H2O = 5-formamido-1-(5-phospho-D-ribosyl)imidazole-4-carboxamide. Its pathway is purine metabolism; IMP biosynthesis via de novo pathway; 5-formamido-1-(5-phospho-D-ribosyl)imidazole-4-carboxamide from 5-amino-1-(5-phospho-D-ribosyl)imidazole-4-carboxamide (10-formyl THF route): step 1/1. It participates in purine metabolism; IMP biosynthesis via de novo pathway; IMP from 5-formamido-1-(5-phospho-D-ribosyl)imidazole-4-carboxamide: step 1/1. The protein is Bifunctional purine biosynthesis protein PurH of Escherichia coli O8 (strain IAI1).